Consider the following 67-residue polypeptide: Large ribosomal subunit protein bL35 (67 aa).

The protein belongs to the bacterial ribosomal protein bL35 family.

The chain is Large ribosomal subunit protein bL35 from Anaeromyxobacter sp. (strain Fw109-5).